We begin with the raw amino-acid sequence, 231 residues long: ATP phosphoribosyltransferase (231 aa).

Belongs to the ATP phosphoribosyltransferase family. Short subfamily. As to quaternary structure, heteromultimer composed of HisG and HisZ subunits.

The protein resides in the cytoplasm. The catalysed reaction is 1-(5-phospho-beta-D-ribosyl)-ATP + diphosphate = 5-phospho-alpha-D-ribose 1-diphosphate + ATP. Its pathway is amino-acid biosynthesis; L-histidine biosynthesis; L-histidine from 5-phospho-alpha-D-ribose 1-diphosphate: step 1/9. Functionally, catalyzes the condensation of ATP and 5-phosphoribose 1-diphosphate to form N'-(5'-phosphoribosyl)-ATP (PR-ATP). Has a crucial role in the pathway because the rate of histidine biosynthesis seems to be controlled primarily by regulation of HisG enzymatic activity. The protein is ATP phosphoribosyltransferase of Brucella melitensis biotype 2 (strain ATCC 23457).